Here is a 435-residue protein sequence, read N- to C-terminus: Serine/threonine-protein kinase 40 (435 aa).

A Protein kinase domain is found at 35–332; the sequence is FILGPRLGNS…EELDSLSSII (298 aa). Residues 41–49 and Lys66 contribute to the ATP site; that span reads LGNSPVPSI. Residue Asp197 is the Proton acceptor of the active site.

The protein belongs to the protein kinase superfamily. CAMK Ser/Thr protein kinase family.

The protein resides in the nucleus. Its subcellular location is the cytoplasm. It catalyses the reaction L-seryl-[protein] + ATP = O-phospho-L-seryl-[protein] + ADP + H(+). The enzyme catalyses L-threonyl-[protein] + ATP = O-phospho-L-threonyl-[protein] + ADP + H(+). May be a negative regulator of NF-kappa-B and p53-mediated gene transcription. The polypeptide is Serine/threonine-protein kinase 40 (STK40) (Gallus gallus (Chicken)).